We begin with the raw amino-acid sequence, 444 residues long: GTPase Der (444 aa).

2 EngA-type G domains span residues 2–167 (LKVA…LKEI) and 173–349 (FKFC…ENLN). Residues 8 to 15 (GKPNVGKS), 55 to 59 (DTGGL), 118 to 121 (NKSE), 179 to 186 (GRPNVGKS), 226 to 230 (DTAGI), and 291 to 294 (NKWD) contribute to the GTP site. The KH-like domain maps to 350–434 (LKFNSKILTD…PITLYFKNKT (85 aa)).

It belongs to the TRAFAC class TrmE-Era-EngA-EngB-Septin-like GTPase superfamily. EngA (Der) GTPase family. In terms of assembly, associates with the 50S ribosomal subunit.

Its function is as follows. GTPase that plays an essential role in the late steps of ribosome biogenesis. The sequence is that of GTPase Der from Malacoplasma penetrans (strain HF-2) (Mycoplasma penetrans).